The sequence spans 554 residues: Beta-eudesmol synthase (554 aa).

Positions 305, 309, and 456 each coordinate Mg(2+). Residues 305-309 carry the DDXXD motif motif; the sequence is DDIYD.

Belongs to the terpene synthase family. Mg(2+) serves as cofactor. Requires Mn(2+) as cofactor. As to expression, expressed in rhizomes. Detected in stems, but not in leaves.

Its subcellular location is the cytoplasm. It carries out the reaction (2E,6E)-farnesyl diphosphate + H2O = beta-eudesmol + diphosphate. The catalysed reaction is (2E,6E)-farnesyl diphosphate + H2O = 10-epi-gamma-eudesmol + diphosphate. It catalyses the reaction (2E,6E)-farnesyl diphosphate + H2O = alpha-eudesmol + diphosphate. The protein operates within secondary metabolite biosynthesis; terpenoid biosynthesis. Involved in the biosynthesis of beta-eudesmol, a sesquiterpene with antifungal activity and responsible for resistance of plants to ant attack. Produces mainly beta-eudesmol, but also smaller amounts of 10-epi-gamma-eudesmol, alpha-eudesmol and aristolene. This Zingiber zerumbet (Shampoo ginger) protein is Beta-eudesmol synthase (ZSS2).